A 456-amino-acid polypeptide reads, in one-letter code: PTS system sucrose-specific EIIBC component (456 aa).

In terms of domain architecture, PTS EIIB type-1 spans Glu-4–Ser-87. The active-site Phosphocysteine intermediate; for EIIB activity is the Cys-26. The PTS EIIC type-1 domain occupies Arg-107 to Glu-456. 10 helical membrane-spanning segments follow: residues Ile-112–Met-132, Ala-144–Ile-164, Thr-181–Phe-201, Met-213–Val-233, Leu-247–Gly-267, Ala-288–Ile-308, Phe-329–Trp-349, Ile-360–Ile-380, Phe-388–Tyr-408, and Leu-428–Val-448.

Its subcellular location is the cell inner membrane. It carries out the reaction N(pros)-phospho-L-histidyl-[protein](out) + sucrose = sucrose 6(G)-phosphate(in) + L-histidyl-[protein]. Functionally, the phosphoenolpyruvate-dependent sugar phosphotransferase system (sugar PTS), a major carbohydrate active transport system, catalyzes the phosphorylation of incoming sugar substrates concomitantly with their translocation across the cell membrane. This system is involved in sucrose transport. This Salmonella typhimurium protein is PTS system sucrose-specific EIIBC component.